The primary structure comprises 126 residues: Fumarate reductase subunit C (126 aa).

3 consecutive transmembrane segments (helical) span residues isoleucine 30 to glycine 50, valine 64 to phenylalanine 84, and valine 105 to leucine 125.

Belongs to the FrdC family. As to quaternary structure, part of an enzyme complex containing four subunits: a flavoprotein (FrdA), an iron-sulfur protein (FrdB), and two hydrophobic anchor proteins (FrdC and FrdD).

The protein resides in the cell membrane. Functionally, anchors the catalytic components of the fumarate reductase complex to the cell membrane, binds quinones. The protein is Fumarate reductase subunit C of Mycobacterium tuberculosis (strain ATCC 25177 / H37Ra).